Consider the following 990-residue polypeptide: Glycine dehydrogenase (decarboxylating) (990 aa).

An N6-(pyridoxal phosphate)lysine modification is found at K726.

Belongs to the GcvP family. The glycine cleavage system is composed of four proteins: P, T, L and H. Pyridoxal 5'-phosphate is required as a cofactor.

The catalysed reaction is N(6)-[(R)-lipoyl]-L-lysyl-[glycine-cleavage complex H protein] + glycine + H(+) = N(6)-[(R)-S(8)-aminomethyldihydrolipoyl]-L-lysyl-[glycine-cleavage complex H protein] + CO2. The glycine cleavage system catalyzes the degradation of glycine. The P protein binds the alpha-amino group of glycine through its pyridoxal phosphate cofactor; CO(2) is released and the remaining methylamine moiety is then transferred to the lipoamide cofactor of the H protein. In Rhodopseudomonas palustris (strain ATCC BAA-98 / CGA009), this protein is Glycine dehydrogenase (decarboxylating).